Here is a 137-residue protein sequence, read N- to C-terminus: Small ribosomal subunit protein uS12 (137 aa).

Disordered stretches follow at residues M1–P22 and K37–K57. Residues R9–S19 are compositionally biased toward basic residues. D102 is modified (3-methylthioaspartic acid).

This sequence belongs to the universal ribosomal protein uS12 family. In terms of assembly, part of the 30S ribosomal subunit. Contacts proteins S8 and S17. May interact with IF1 in the 30S initiation complex.

In terms of biological role, with S4 and S5 plays an important role in translational accuracy. Its function is as follows. Interacts with and stabilizes bases of the 16S rRNA that are involved in tRNA selection in the A site and with the mRNA backbone. Located at the interface of the 30S and 50S subunits, it traverses the body of the 30S subunit contacting proteins on the other side and probably holding the rRNA structure together. The combined cluster of proteins S8, S12 and S17 appears to hold together the shoulder and platform of the 30S subunit. This Limosilactobacillus fermentum (strain NBRC 3956 / LMG 18251) (Lactobacillus fermentum) protein is Small ribosomal subunit protein uS12.